Reading from the N-terminus, the 308-residue chain is Quinolinate synthase (308 aa).

Iminosuccinate is bound by residues His24 and Ser41. Cys86 provides a ligand contact to [4Fe-4S] cluster. Iminosuccinate contacts are provided by residues 112–114 (YIN) and Ser129. Residue Cys172 participates in [4Fe-4S] cluster binding. Residues 198 to 200 (HPE) and Thr215 each bind iminosuccinate. Cys265 contributes to the [4Fe-4S] cluster binding site.

This sequence belongs to the quinolinate synthase family. Type 2 subfamily. [4Fe-4S] cluster is required as a cofactor.

The protein localises to the cytoplasm. It catalyses the reaction iminosuccinate + dihydroxyacetone phosphate = quinolinate + phosphate + 2 H2O + H(+). Its pathway is cofactor biosynthesis; NAD(+) biosynthesis; quinolinate from iminoaspartate: step 1/1. Functionally, catalyzes the condensation of iminoaspartate with dihydroxyacetone phosphate to form quinolinate. The sequence is that of Quinolinate synthase from Sulfurihydrogenibium sp. (strain YO3AOP1).